We begin with the raw amino-acid sequence, 198 residues long: ADP-ribosylation factor-like protein 3 (198 aa).

Position 1 is an N-acetylmethionine (Met1). Gly24–Thr31 is a GTP binding site. Residue Lys50 forms a Glycyl lysine isopeptide (Lys-Gly) (interchain with G-Cter in ubiquitin) linkage. Residues Asp74–Gln78 and Asn133–Asp136 each bind GTP.

The protein belongs to the small GTPase superfamily. Arf family. In terms of assembly, interacts with SYS1 and SLO1.

It is found in the golgi apparatus. In terms of biological role, involved in the targeting of ARL1 to the Golgi. Can bind and hydrolyze GTP. The polypeptide is ADP-ribosylation factor-like protein 3 (ARL3) (Saccharomyces cerevisiae (strain ATCC 204508 / S288c) (Baker's yeast)).